We begin with the raw amino-acid sequence, 88 residues long: UPF0367 protein syc2447_c (88 aa).

This sequence belongs to the UPF0367 family.

This is UPF0367 protein syc2447_c from Synechococcus sp. (strain ATCC 27144 / PCC 6301 / SAUG 1402/1) (Anacystis nidulans).